A 920-amino-acid chain; its full sequence is Alpha-L-rhamnosidase (920 aa).

Positions 1 to 19 (MCVVRTFWFAVLTVIFAVS) are cleaved as a signal peptide. Cysteine 20 is lipidated: N-palmitoyl cysteine. Cysteine 20 carries the S-diacylglycerol cysteine lipid modification. Alpha-L-rhamnose-binding positions include aspartate 500, 504 to 506 (RDE), aspartate 513, and tryptophan 565. Glutamate 506 (proton donor) is an active-site residue. Glutamate 779 (proton acceptor) is an active-site residue. Histidine 800 lines the alpha-L-rhamnose pocket.

Belongs to the glycosyl hydrolase 78 family.

It is found in the cell membrane. The catalysed reaction is Hydrolysis of terminal non-reducing alpha-L-rhamnose residues in alpha-L-rhamnosides.. Alpha-L-rhamnosidase involved in ulvan degradation. Ulvan is the main polysaccharide component of the Ulvales (green seaweed) cell wall. It is composed of disaccharide building blocks comprising 3-sulfated rhamnose (Rha3S) linked to D-glucuronic acid (GlcA), L-iduronic acid (IduA), or D-xylose (Xyl). The enzyme is able to degrade p-nitrophenyl-alpha-L-rhamnopyranoside (PNP-Rha) in vitro. Incubating the enzyme with the products obtained after degradation with ulvan lyase and beta-glucuronyl hydrolase (i.e. the trisaccharides beta-alpha-L-Rha3S-IduA-Rha3S and beta-alpha-L-Rha3S-GlcA-Rha3S) showed no degradation, suggesting that the enzyme is active on neutral rhamnose and that desulfation of the oligosaccharide must be achieved before cleavage of rhamnose. In Alteromonas sp. (strain LOR), this protein is Alpha-L-rhamnosidase.